The sequence spans 126 residues: Large ribosomal subunit protein bL17 (126 aa).

The protein belongs to the bacterial ribosomal protein bL17 family. As to quaternary structure, part of the 50S ribosomal subunit. Contacts protein L32.

This is Large ribosomal subunit protein bL17 from Lactococcus lactis subsp. lactis (strain IL1403) (Streptococcus lactis).